Reading from the N-terminus, the 710-residue chain is Polyribonucleotide nucleotidyltransferase (710 aa).

Mg(2+) is bound by residues aspartate 489 and aspartate 495. The 60-residue stretch at 556–615 (PKIDTIKIDVDKIKVVIGKGGETIDKIIAETGVKIDIDDEGNVSIYSSDQAAIDRTKEII) folds into the KH domain. Positions 625 to 693 (GEVYHAKVVR…EKGRVDASMK (69 aa)) constitute an S1 motif domain. The segment at 691 to 710 (SMKALIPRPPKPEKKEEKHD) is disordered. A compositionally biased stretch (basic and acidic residues) spans 700 to 710 (PKPEKKEEKHD).

The protein belongs to the polyribonucleotide nucleotidyltransferase family. Mg(2+) is required as a cofactor.

The protein localises to the cytoplasm. The enzyme catalyses RNA(n+1) + phosphate = RNA(n) + a ribonucleoside 5'-diphosphate. In terms of biological role, involved in mRNA degradation. Catalyzes the phosphorolysis of single-stranded polyribonucleotides processively in the 3'- to 5'-direction. This Streptococcus pyogenes serotype M49 (strain NZ131) protein is Polyribonucleotide nucleotidyltransferase.